Here is a 469-residue protein sequence, read N- to C-terminus: Neuraminidase (469 aa).

Residues 1 to 9 (MNPNQKIIT) lie on the Intravirion side of the membrane. Residues 10-30 (IGSVSLIIATICFLMQIAILV) form a helical membrane-spanning segment. The involved in apical transport and lipid raft association stretch occupies residues 11 to 33 (GSVSLIIATICFLMQIAILVTTV). Residues 31–469 (TTVTLHFKQY…DGADINLMPI (439 aa)) lie on the Virion surface side of the membrane. The hypervariable stalk region stretch occupies residues 36 to 88 (HFKQYECDSPANNQVMPCEPIIIERNITEIVYLTNTTIEKEICPKLVEYRNWS). N-linked (GlcNAc...) asparagine; by host glycans are attached at residues Asn-61, Asn-70, and Asn-86. Residues 91-469 (QCKITGFAPF…DGADINLMPI (379 aa)) are head of neuraminidase. 8 disulfides stabilise this stretch: Cys-92-Cys-417, Cys-124-Cys-129, Cys-183-Cys-230, Cys-232-Cys-237, Cys-278-Cys-291, Cys-280-Cys-289, Cys-318-Cys-337, and Cys-421-Cys-447. Residue Arg-118 participates in substrate binding. Asn-146 is a glycosylation site (N-linked (GlcNAc...) asparagine; by host). Residue Asp-151 is the Proton donor/acceptor of the active site. Residue Arg-152 coordinates substrate. Residues Asn-200 and Asn-234 are each glycosylated (N-linked (GlcNAc...) asparagine; by host). 276–277 (EE) lines the substrate pocket. Substrate is bound at residue Arg-292. Residues Asp-293, Gly-297, and Asp-324 each coordinate Ca(2+). Arg-371 serves as a coordination point for substrate. Asn-402 is a glycosylation site (N-linked (GlcNAc...) asparagine; by host). Tyr-406 serves as the catalytic Nucleophile.

This sequence belongs to the glycosyl hydrolase 34 family. In terms of assembly, homotetramer. Ca(2+) serves as cofactor. In terms of processing, N-glycosylated.

The protein resides in the virion membrane. It localises to the host apical cell membrane. It catalyses the reaction Hydrolysis of alpha-(2-&gt;3)-, alpha-(2-&gt;6)-, alpha-(2-&gt;8)- glycosidic linkages of terminal sialic acid residues in oligosaccharides, glycoproteins, glycolipids, colominic acid and synthetic substrates.. Inhibited by the neuraminidase inhibitors zanamivir (Relenza) and oseltamivir (Tamiflu). These drugs interfere with the release of progeny virus from infected cells and are effective against all influenza strains. Resistance to neuraminidase inhibitors is quite rare. Functionally, catalyzes the removal of terminal sialic acid residues from viral and cellular glycoconjugates. Cleaves off the terminal sialic acids on the glycosylated HA during virus budding to facilitate virus release. Additionally helps virus spread through the circulation by further removing sialic acids from the cell surface. These cleavages prevent self-aggregation and ensure the efficient spread of the progeny virus from cell to cell. Otherwise, infection would be limited to one round of replication. Described as a receptor-destroying enzyme because it cleaves a terminal sialic acid from the cellular receptors. May facilitate viral invasion of the upper airways by cleaving the sialic acid moieties on the mucin of the airway epithelial cells. Likely to plays a role in the budding process through its association with lipid rafts during intracellular transport. May additionally display a raft-association independent effect on budding. Plays a role in the determination of host range restriction on replication and virulence. Sialidase activity in late endosome/lysosome traffic seems to enhance virus replication. This Aves (whales) protein is Neuraminidase.